Reading from the N-terminus, the 478-residue chain is Cytochrome c-552 (478 aa).

The N-terminal stretch at 1–26 (MARKTLRARRFFSLIFPFFFMTSVYA) is a signal peptide. His-94 is a binding site for heme c. Residues Cys-122, Cys-125, and Lys-126 each contribute to the heme site. Heme c is bound by residues Cys-160, Cys-163, His-164, Cys-209, Cys-212, and His-213. Residues Glu-215, Tyr-216, Lys-261, and Gln-263 each coordinate Ca(2+). Tyr-216 contacts substrate. His-264 serves as a coordination point for substrate. 9 residues coordinate heme c: His-275, Cys-282, Cys-285, His-286, His-301, Cys-314, Cys-317, His-318, and His-393.

Belongs to the cytochrome c-552 family. Ca(2+) serves as cofactor. Heme c is required as a cofactor.

The protein resides in the periplasm. The enzyme catalyses 6 Fe(III)-[cytochrome c] + NH4(+) + 2 H2O = 6 Fe(II)-[cytochrome c] + nitrite + 8 H(+). It functions in the pathway nitrogen metabolism; nitrate reduction (assimilation). Its function is as follows. Catalyzes the reduction of nitrite to ammonia, consuming six electrons in the process. The polypeptide is Cytochrome c-552 (Salmonella arizonae (strain ATCC BAA-731 / CDC346-86 / RSK2980)).